A 186-amino-acid chain; its full sequence is Large ribosomal subunit protein bL9 (186 aa).

The span at 151–167 (PEEAEKQARGEAIMREE) shows a compositional bias: basic and acidic residues. A disordered region spans residues 151 to 186 (PEEAEKQARGEAIMREESEYELETGEEVAEGPEQTA). Acidic residues predominate over residues 168–180 (SEYELETGEEVAE).

Belongs to the bacterial ribosomal protein bL9 family.

In terms of biological role, binds to the 23S rRNA. This Acidiphilium cryptum (strain JF-5) protein is Large ribosomal subunit protein bL9.